The primary structure comprises 418 residues: Serine hydroxymethyltransferase (418 aa).

Residues Leu120 and 124–126 (GHL) each bind (6S)-5,6,7,8-tetrahydrofolate. At Lys229 the chain carries N6-(pyridoxal phosphate)lysine. 353–355 (SPF) contacts (6S)-5,6,7,8-tetrahydrofolate.

This sequence belongs to the SHMT family. Homodimer. Requires pyridoxal 5'-phosphate as cofactor.

The protein resides in the cytoplasm. The enzyme catalyses (6R)-5,10-methylene-5,6,7,8-tetrahydrofolate + glycine + H2O = (6S)-5,6,7,8-tetrahydrofolate + L-serine. It functions in the pathway one-carbon metabolism; tetrahydrofolate interconversion. It participates in amino-acid biosynthesis; glycine biosynthesis; glycine from L-serine: step 1/1. Catalyzes the reversible interconversion of serine and glycine with tetrahydrofolate (THF) serving as the one-carbon carrier. This reaction serves as the major source of one-carbon groups required for the biosynthesis of purines, thymidylate, methionine, and other important biomolecules. Also exhibits THF-independent aldolase activity toward beta-hydroxyamino acids, producing glycine and aldehydes, via a retro-aldol mechanism. This Psychrobacter sp. (strain PRwf-1) protein is Serine hydroxymethyltransferase.